Reading from the N-terminus, the 258-residue chain is Imidazole glycerol phosphate synthase subunit HisF (258 aa).

Residues Asp11 and Asp130 contribute to the active site.

Belongs to the HisA/HisF family. In terms of assembly, heterodimer of HisH and HisF.

It localises to the cytoplasm. The enzyme catalyses 5-[(5-phospho-1-deoxy-D-ribulos-1-ylimino)methylamino]-1-(5-phospho-beta-D-ribosyl)imidazole-4-carboxamide + L-glutamine = D-erythro-1-(imidazol-4-yl)glycerol 3-phosphate + 5-amino-1-(5-phospho-beta-D-ribosyl)imidazole-4-carboxamide + L-glutamate + H(+). The protein operates within amino-acid biosynthesis; L-histidine biosynthesis; L-histidine from 5-phospho-alpha-D-ribose 1-diphosphate: step 5/9. In terms of biological role, IGPS catalyzes the conversion of PRFAR and glutamine to IGP, AICAR and glutamate. The HisF subunit catalyzes the cyclization activity that produces IGP and AICAR from PRFAR using the ammonia provided by the HisH subunit. In Salmonella arizonae (strain ATCC BAA-731 / CDC346-86 / RSK2980), this protein is Imidazole glycerol phosphate synthase subunit HisF.